A 296-amino-acid polypeptide reads, in one-letter code: Aldo-keto reductase MYCFIDRAFT_156381 (296 aa).

An NADP(+)-binding site is contributed by Asp-14. Tyr-19 (proton donor) is an active-site residue. Residue His-83 participates in substrate binding. Residues 113–114, Gln-139, 168–178, and Arg-191 contribute to the NADP(+) site; these read CN and SPLAGGMLTDR. Tyr-201 contacts substrate. 255 to 263 serves as a coordination point for NADP(+); it reads SSAEQLESN.

The protein belongs to the aldo/keto reductase family. Aldo/keto reductase 2 subfamily.

It participates in secondary metabolite biosynthesis. Functionally, aldo-keto reductase; part of the gene cluster that mediates the biosynthesis of an emodin derivative that may be involved in black Sigatoka disease of banana. The pathway begins with the synthesis of atrochrysone thioester by the polyketide synthase PKS8-1. The atrochrysone carboxyl ACP thioesterase MYCFIDRAFT_190111 then breaks the thioester bond and releases the atrochrysone carboxylic acid from PKS8-1. The decarboxylase MYCFIDRAFT_34057 then catalyzes the concerted decarboxylation-elimination required to convert atochrysone carboxylic acid into emodin anthrone, which is further oxidized to emodin by the anthrone oxygenase MYCFIDRAFT_34418. The functions of the other tailoring enzymes as well as the final product of the cluster have still to be identified. This Pseudocercospora fijiensis (strain CIRAD86) (Black leaf streak disease fungus) protein is Aldo-keto reductase MYCFIDRAFT_156381.